A 376-amino-acid polypeptide reads, in one-letter code: Chaperone protein DnaJ (376 aa).

In terms of domain architecture, J spans D5–G70. The CR-type zinc finger occupies G133 to K211. Residues C146, C149, C163, C166, C185, C188, C199, and C202 each coordinate Zn(2+). CXXCXGXG motif repeat units follow at residues C146–G153, C163–G170, C185–G192, and C199–G206.

Belongs to the DnaJ family. Homodimer. The cofactor is Zn(2+).

It is found in the cytoplasm. In terms of biological role, participates actively in the response to hyperosmotic and heat shock by preventing the aggregation of stress-denatured proteins and by disaggregating proteins, also in an autonomous, DnaK-independent fashion. Unfolded proteins bind initially to DnaJ; upon interaction with the DnaJ-bound protein, DnaK hydrolyzes its bound ATP, resulting in the formation of a stable complex. GrpE releases ADP from DnaK; ATP binding to DnaK triggers the release of the substrate protein, thus completing the reaction cycle. Several rounds of ATP-dependent interactions between DnaJ, DnaK and GrpE are required for fully efficient folding. Also involved, together with DnaK and GrpE, in the DNA replication of plasmids through activation of initiation proteins. The chain is Chaperone protein DnaJ from Mannheimia succiniciproducens (strain KCTC 0769BP / MBEL55E).